The sequence spans 214 residues: Adenylate kinase (214 aa).

10 to 15 (GAGKGT) contributes to the ATP binding site. Residues 30 to 59 (STGDMLRAAVKAGTPLGLEAKKVMDAGQLV) are NMP. AMP contacts are provided by residues T31, R36, 57–59 (QLV), 85–88 (GFPR), and Q92. Residues 122 to 159 (GRRVHPGSGRVYHIVFNQPKVEGKDDVTGEDLAIRPDD) are LID. ATP-binding positions include R123 and 132 to 133 (VY). AMP contacts are provided by R156 and R167. Q200 provides a ligand contact to ATP.

The protein belongs to the adenylate kinase family. As to quaternary structure, monomer.

The protein localises to the cytoplasm. It catalyses the reaction AMP + ATP = 2 ADP. The protein operates within purine metabolism; AMP biosynthesis via salvage pathway; AMP from ADP: step 1/1. Its function is as follows. Catalyzes the reversible transfer of the terminal phosphate group between ATP and AMP. Plays an important role in cellular energy homeostasis and in adenine nucleotide metabolism. The polypeptide is Adenylate kinase (Shewanella woodyi (strain ATCC 51908 / MS32)).